Here is a 1184-residue protein sequence, read N- to C-terminus: Cartilage intermediate layer protein 1 (1184 aa).

Positions 1–21 (MVGTKAWVFSFLVLEVTSVLG) are cleaved as a signal peptide. 2 N-linked (GlcNAc...) asparagine glycosylation sites follow: N129 and N132. Residues 149-201 (ERIWSPWSPWSKCSAACGQTGVQTRTRICLAEMVSLCSEASEEGQHCMGQDCT) form the TSP type-1 domain. 4 disulfides stabilise this stretch: C161-C195, C165-C200, C177-C185, and C330-C376. Residues 309–395 (PYMVMNPETK…KSKVAQLIVI (87 aa)) form the Ig-like C2-type domain. 6 N-linked (GlcNAc...) asparagine glycosylation sites follow: N346, N420, N550, N631, N1000, and N1056. The interval 1136 to 1170 (TPAQSPAAGTVQGRVPSRRQQRASRGGQRQGGVVA) is disordered. Low complexity predominate over residues 1158–1170 (ASRGGQRQGGVVA).

In terms of assembly, monomer. Interacts with TGFB1. In terms of processing, cleaved into 2 chains possibly by a furin-like protease upon or preceding secretion. In terms of tissue distribution, specifically expressed in cartilage. Localizes in the intermediates layer of articular cartilage but neither in the superficial nor in the deepest regions. Specifically and highly expressed in intervertebral disk tissue. Expression increases with aging in hip articular cartilage. Overexpressed in articular hyaline cartilage from patients with calcium pyrophosphate dihydrate crystal deposition disease (CPPD). Expression in intervertebral disk tissue from individuals with lumbar disk disease increases as disk degeneration progresses.

Its subcellular location is the secreted. It is found in the extracellular space. It localises to the extracellular matrix. Probably plays a role in cartilage scaffolding. May act by antagonizing TGF-beta1 (TGFB1) and IGF1 functions. Has the ability to suppress IGF1-induced proliferation and sulfated proteoglycan synthesis, and inhibits ligand-induced IGF1R autophosphorylation. May inhibit TGFB1-mediated induction of cartilage matrix genes via its interaction with TGFB1. Overexpression may lead to impair chondrocyte growth and matrix repair and indirectly promote inorganic pyrophosphate (PPi) supersaturation in aging and osteoarthritis cartilage. This Homo sapiens (Human) protein is Cartilage intermediate layer protein 1 (CILP).